We begin with the raw amino-acid sequence, 423 residues long: Putative galacturan 1,4-alpha-galacturonidase C (423 aa).

The first 20 residues, 1–20 (MRFSIISLVSLPLFLGLTYA), serve as a signal peptide directing secretion. Asparagine 100, asparagine 120, asparagine 150, asparagine 173, and asparagine 185 each carry an N-linked (GlcNAc...) asparagine glycan. The active-site Proton donor is aspartate 229. Residues cysteine 231 and cysteine 248 are joined by a disulfide bond. Asparagine 245 carries N-linked (GlcNAc...) asparagine glycosylation. Asparagine 252 is a catalytic residue. N-linked (GlcNAc...) asparagine glycosylation is found at asparagine 344 and asparagine 362. A disulfide bond links cysteine 379 and cysteine 385. Asparagine 400 carries N-linked (GlcNAc...) asparagine glycosylation. A disulfide bond links cysteine 409 and cysteine 423.

Belongs to the glycosyl hydrolase 28 family.

It localises to the secreted. The catalysed reaction is [(1-&gt;4)-alpha-D-galacturonosyl](n) + H2O = alpha-D-galacturonate + [(1-&gt;4)-alpha-D-galacturonosyl](n-1). Specific in hydrolyzing the terminal glycosidic bond of polygalacturonic acid and oligogalacturonates. The polypeptide is Putative galacturan 1,4-alpha-galacturonidase C (rgxC) (Neosartorya fischeri (strain ATCC 1020 / DSM 3700 / CBS 544.65 / FGSC A1164 / JCM 1740 / NRRL 181 / WB 181) (Aspergillus fischerianus)).